A 75-amino-acid polypeptide reads, in one-letter code: Protein Tlp homolog (75 aa).

Residues 48 to 75 (KNQRRREALDGMREEIKDEARDKKNGYM) are disordered.

The protein belongs to the Tlp family.

The protein is Protein Tlp homolog of Clostridium botulinum (strain 657 / Type Ba4).